The primary structure comprises 168 residues: uncharacterized protein (168 aa).

This is an uncharacterized protein from Escherichia coli (strain K12).